We begin with the raw amino-acid sequence, 438 residues long: MSDGTLFIQDSRTSKQYTISVTSDTITAVDFQKITSPTGKLALYDPGLQNTIIKKTQITGRDPVTGITLFRGLSAKEIWNRHADFEDHFHLLVFGKYPSPEESEALRRRLAVQMTVVPETVIKAVQAFPRTSHPLPMIIAGLAAFISADPSSLPAIRGGNIYHGNRALCDEGVIRATAAYAVVMGLINSHRKQLPYVPADPQKSFYENVFAMMRCPVHHNYLVTFREGMVLNSDNGMTQSSVVLLSTASSLPDPISCLISAITAAYGPLHYGAQEAGSTTLKSIGSLDKVPEFLEQVKRRERRLFGFGHRLHKREDPRLASVKRWLKMMDYTPDQEPLLELAQEIDRLASSDEYFIKRNLRANADFYTHFLFKAWGFDWDMLCAANMFHRIIGLMAHWREAMDQPIKIFRATDLYVGPVVIQEDNRTVLEEPKIQSRL.

Catalysis depends on residues His-309 and Asp-365.

It belongs to the citrate synthase family.

The enzyme catalyses (2E,10E)-dode-2,10-dicenoyl-CoA + oxaloacetate + H2O = (4E,11E)-2-hydroxytrideca-4,11-dien-1,2,3-tricarboxylate + CoA + H(+). It participates in secondary metabolite biosynthesis. In terms of biological role, alkylcitrate synthase; part of the gene cluster that mediates the biosynthesis of the antihypercholesterolemic agents phomoidrides which are dimeric anhydrides. Within the pathway, the alkylcitrate synthase (ACS) tstJ and the alkylcitrate dehydratase (ACDH) tstI produce the decarboxylated monomeric anhydrides by coupling the C12-fatty acyl product from phiA with oxalacetic acid. The pathway begins with the highly reducing polyketide synthase tstA that catalyzes the formation of a C12-fatty acyl-ACP, starting from one acetate and 5 malonate units. The hydrolase tstM is involved in the release of the C12-fatty acyl chain from phiA. The alkylcitrate synthase (ACS) tstJ and the alkylcitrate dehydratase (ACDH) tstI then give rise to decarboxylated monomeric anhydrides by coupling the C12-fatty acyl chain with oxalacetic acid. The cyclase tstC is responsible for the dimerization of the monomeric anhydrides which leads to the production of prephomoidride that contains the characteristic bicyclo[4.3.1]deca-1,6-diene system of phomoidrides. Iterative oxidation catalyzed by the alpha-ketoglutarate-dependent dioxygenase tstK produced then phomoidride A. Finally, the methyltransferase tstE converts phomoidride A to phomoidride B via an acetalization reaction. The phosphatidylethanolamine-binding protein tstB and tstN are not essential for dimerization and their functions have still to be determined. In Talaromyces stipitatus (strain ATCC 10500 / CBS 375.48 / QM 6759 / NRRL 1006) (Penicillium stipitatum), this protein is Alkylcitrate synthase tstJ.